We begin with the raw amino-acid sequence, 366 residues long: Left-right determination factor 1 (366 aa).

An N-terminal signal peptide occupies residues 1–21 (MQPLWLCWALWVLPLASPGAA). The propeptide at 22–76 (LTGEQLLGSLLRQLQLKEVPTLDRADMEELVIPTHVRAQYVALLQRSHGDRSRGK) is or 135. Asparagine 158 is a glycosylation site (N-linked (GlcNAc...) asparagine). Disulfide bonds link cysteine 251/cysteine 264, cysteine 263/cysteine 316, cysteine 293/cysteine 351, and cysteine 297/cysteine 353.

Belongs to the TGF-beta family. In terms of processing, the processing of the protein may also occur at the second R-X-X-R site located at AA 132-135. Processing appears to be regulated in a cell-type specific manner.

The protein resides in the secreted. Required for left-right axis determination as a regulator of LEFTY2 and NODAL. This is Left-right determination factor 1 (LEFTY1) from Homo sapiens (Human).